We begin with the raw amino-acid sequence, 203 residues long: Imidazoleglycerol-phosphate dehydratase (203 aa).

Residues aspartate 184 to glutamine 203 are disordered.

Belongs to the imidazoleglycerol-phosphate dehydratase family.

Its subcellular location is the cytoplasm. The catalysed reaction is D-erythro-1-(imidazol-4-yl)glycerol 3-phosphate = 3-(imidazol-4-yl)-2-oxopropyl phosphate + H2O. It participates in amino-acid biosynthesis; L-histidine biosynthesis; L-histidine from 5-phospho-alpha-D-ribose 1-diphosphate: step 6/9. The sequence is that of Imidazoleglycerol-phosphate dehydratase from Prochlorococcus marinus (strain NATL1A).